The sequence spans 98 residues: MAISKALIASLLISLLVLQLVQADVENSQKKNGYAKKIDCGSACVARCRLSRRPRLCHRACGTCCYRCNCVPPGTYGNYDKCQCYASLTTHGGRRKCP.

The signal sequence occupies residues 1 to 23 (MAISKALIASLLISLLVLQLVQA).

The protein belongs to the GASA family. Post-translationally, six disulfide bonds may be present. As to expression, expressed in flower buds, style, stamen filaments, vasculature of sepals, flower abscission zone and green siliques. Lower levels seen in the root phloem, cotyledons and vasculature of rosette leaves.

Its subcellular location is the secreted. In terms of biological role, gibberellin-regulated protein that may function in hormonal controlled steps of development such as seed germination, flowering and seed maturation. The polypeptide is Gibberellin-regulated protein 1 (GASA1) (Arabidopsis thaliana (Mouse-ear cress)).